The sequence spans 406 residues: Tryptophan 2,3-dioxygenase (406 aa).

Residues 72–76 and Arg144 each bind substrate; that span reads FIITH. His328 provides a ligand contact to heme. Thr342 contacts substrate.

The protein belongs to the tryptophan 2,3-dioxygenase family. As to quaternary structure, homotetramer. Dimer of dimers. The cofactor is heme.

It carries out the reaction L-tryptophan + O2 = N-formyl-L-kynurenine. It participates in amino-acid degradation; L-tryptophan degradation via kynurenine pathway; L-kynurenine from L-tryptophan: step 1/2. In terms of biological role, heme-dependent dioxygenase that catalyzes the oxidative cleavage of the L-tryptophan (L-Trp) pyrrole ring and converts L-tryptophan to N-formyl-L-kynurenine. Catalyzes the oxidative cleavage of the indole moiety. The chain is Tryptophan 2,3-dioxygenase from Homo sapiens (Human).